A 96-amino-acid chain; its full sequence is Protein E7 (96 aa).

An E7 terminal domain region spans residues 1–37; that stretch reads MIGKEVTLQDIVLELTEPQTVDLHCEEELPEQDTEVE. Residues 23–27 carry the LXCXE motif; interaction with host RB1 and TMEM173/STING motif; that stretch reads LHCEE. The segment at 49–86 is a zinc-finger region; it reads CGGGCGTRLRLFVAATQFGIRGLQDLLLEEVVILCPDC. Residues 68 to 76 carry the Nuclear export signal motif; that stretch reads IRGLQDLLL.

It belongs to the papillomaviridae E7 protein family. In terms of assembly, homodimer. Homooligomer. Interacts with host RB1; this interaction induces dissociation of RB1-E2F1 complex thereby disrupting RB1 activity. Interacts with host EP300; this interaction represses EP300 transcriptional activity. Interacts with protein E2; this interaction inhibits E7 oncogenic activity. Interacts with host TMEM173/STING; this interaction impairs the ability of TMEM173/STING to sense cytosolic DNA and promote the production of type I interferon (IFN-alpha and IFN-beta). Post-translationally, highly phosphorylated.

Its subcellular location is the host cytoplasm. It localises to the host nucleus. Plays a role in viral genome replication by driving entry of quiescent cells into the cell cycle. Stimulation of progression from G1 to S phase allows the virus to efficiently use the cellular DNA replicating machinery to achieve viral genome replication. E7 protein has both transforming and trans-activating activities. Induces the disassembly of the E2F1 transcription factor from RB1, with subsequent transcriptional activation of E2F1-regulated S-phase genes. Interferes with host histone deacetylation mediated by HDAC1 and HDAC2, leading to transcription activation. Also plays a role in the inhibition of both antiviral and antiproliferative functions of host interferon alpha. Interaction with host TMEM173/STING impairs the ability of TMEM173/STING to sense cytosolic DNA and promote the production of type I interferon (IFN-alpha and IFN-beta). In Homo sapiens (Human), this protein is Protein E7.